An 824-amino-acid polypeptide reads, in one-letter code: Leucine--tRNA ligase (824 aa).

A 'HIGH' region motif is present at residues 42–52 (PYPSGRIHMGH). A 'KMSKS' region motif is present at residues 581 to 585 (KMSKS). ATP is bound at residue K584.

Belongs to the class-I aminoacyl-tRNA synthetase family.

Its subcellular location is the cytoplasm. It carries out the reaction tRNA(Leu) + L-leucine + ATP = L-leucyl-tRNA(Leu) + AMP + diphosphate. In Geotalea daltonii (strain DSM 22248 / JCM 15807 / FRC-32) (Geobacter daltonii), this protein is Leucine--tRNA ligase.